We begin with the raw amino-acid sequence, 1131 residues long: Protein TOPLESS (1131 aa).

Positions 4-36 constitute a LisH domain; the sequence is LSRELVFLILQFLDEEKFKETVHKLEQESGFFF. A CTLH domain is found at 34–92; the sequence is FFFNMKYFEDEVHNGNWDEVEKYLSGFTKVDDNRYSMKIFFEIRKQKYLEALDKHDRPK. S214 is subject to Phosphoserine. Positions 286-305 are disordered; that stretch reads TPPTNASLDYPSADSEHVSK. WD repeat units follow at residues 353–393, 415–454, 460–501, 504–545, 548–591, 595–634, 639–678, 710–756, 766–805, 833–871, 874–914, 917–956, 967–1005, 1010–1049, and 1060–1102; these read SQGS…RLVQ, EPVV…DMRQ, AHVG…KRHT, GHEA…SRVD, APGR…VKRT, FHKR…LLTA, GGLQ…RLLH, DRSA…EPSQ, LRVA…RNAT, NPEE…TMAT, PPPP…VKSK, GHSK…KQRS, NSAP…CMKQ, ESLA…LRCR, and LSNS…GKWG. Positions 1100–1131 are disordered; it reads KWGVAPPAENGSASGAPTAPSVGASASDQPQR.

As to quaternary structure, tetramer. Homodimer. Interacts (via the LisH domain) with WUS (via the C-terminal domain). Interacts with NINJA/AFPH2. Interacts with IAA1; IAA2; IAA3; IAA4; IAA6; IAA8; IAA9; IAA11; IAA13; IAA14; IAA17; IAA18; IAA26; IAA27 and IAA28. Interacts (via the LisH domain) with IAA12/BDL (via domain I). Can form a complex with IAA12 and ARF5. Interacts with AP2 (via EAR motif) and HDA19. Interacts with TIFY5A/JAZ8 (via EAR motif). Interacts with SPEAR3/TIE1. Interacts with SPL (via EAR motif). Interacts with ZAT2 and ZAT3 (via the EAR motif). Interacts with JAZ13 (via EAR motif). Interacts with GIR1 and GIR2. Expressed in embryo and in extraembryonic tissues. Expressed in inflorescences, flowers, floral meristems, developing anthers and ovules. Detected in the vascular tissues, shoot apical meristem, cotyledons and young leaves. Expressed ubiquitously in the pistils, stamens and pollens.

It localises to the nucleus. Transcriptional corepressor. May repress the expression of root-promoting genes in the top half of the embryo to allow proper differentiation of the shoot pole during the transition stage of embryogenesis. Regulates the expression of PLT1 and PLT2. Negative regulator of jasmonate responses. Negative regulator of auxin responses. Negative regulator of multiple floral organ identity genes. Required for ovule development. The protein is Protein TOPLESS (TPL) of Arabidopsis thaliana (Mouse-ear cress).